The sequence spans 51 residues: Sperm protamine P1 (51 aa).

2 disulfide bridges follow: cysteine 7–cysteine 15 and cysteine 40–cysteine 48.

Belongs to the protamine P1 family. Cross-linked by interchain disulfide bonds around the DNA-helix. Testis.

The protein resides in the nucleus. It localises to the chromosome. Protamines substitute for histones in the chromatin of sperm during the haploid phase of spermatogenesis. They compact sperm DNA into a highly condensed, stable and inactive complex. This is Sperm protamine P1 (PRM1) from Capra hircus (Goat).